The primary structure comprises 272 residues: Putative pyruvate, phosphate dikinase regulatory protein (272 aa).

Gly153–Thr160 is an ADP binding site.

This sequence belongs to the pyruvate, phosphate/water dikinase regulatory protein family. PDRP subfamily.

The enzyme catalyses N(tele)-phospho-L-histidyl/L-threonyl-[pyruvate, phosphate dikinase] + ADP = N(tele)-phospho-L-histidyl/O-phospho-L-threonyl-[pyruvate, phosphate dikinase] + AMP + H(+). It catalyses the reaction N(tele)-phospho-L-histidyl/O-phospho-L-threonyl-[pyruvate, phosphate dikinase] + phosphate + H(+) = N(tele)-phospho-L-histidyl/L-threonyl-[pyruvate, phosphate dikinase] + diphosphate. Bifunctional serine/threonine kinase and phosphorylase involved in the regulation of the pyruvate, phosphate dikinase (PPDK) by catalyzing its phosphorylation/dephosphorylation. The chain is Putative pyruvate, phosphate dikinase regulatory protein from Chelativorans sp. (strain BNC1).